The sequence spans 199 residues: dCTP deaminase (199 aa).

DCTP contacts are provided by residues Arg-110–Arg-115, Asp-128, Val-136–Glu-138, Tyr-171, and Gln-182. Catalysis depends on Glu-138, which acts as the Proton donor/acceptor.

Belongs to the dCTP deaminase family. As to quaternary structure, homotrimer.

The catalysed reaction is dCTP + H2O + H(+) = dUTP + NH4(+). It functions in the pathway pyrimidine metabolism; dUMP biosynthesis; dUMP from dCTP (dUTP route): step 1/2. In terms of biological role, catalyzes the deamination of dCTP to dUTP. This chain is dCTP deaminase, found in Pseudoalteromonas atlantica (strain T6c / ATCC BAA-1087).